The sequence spans 339 residues: Anthranilate phosphoribosyltransferase (339 aa).

5-phospho-alpha-D-ribose 1-diphosphate is bound by residues G81, 84 to 85 (GD), S89, 91 to 94 (NVST), 109 to 117 (KHGNRALSS), and A121. Anthranilate is bound at residue G81. S93 is a Mg(2+) binding site. An anthranilate-binding site is contributed by N112. Position 167 (R167) interacts with anthranilate. Mg(2+) contacts are provided by D226 and E227.

It belongs to the anthranilate phosphoribosyltransferase family. In terms of assembly, homodimer. Requires Mg(2+) as cofactor.

It carries out the reaction N-(5-phospho-beta-D-ribosyl)anthranilate + diphosphate = 5-phospho-alpha-D-ribose 1-diphosphate + anthranilate. It participates in amino-acid biosynthesis; L-tryptophan biosynthesis; L-tryptophan from chorismate: step 2/5. Its function is as follows. Catalyzes the transfer of the phosphoribosyl group of 5-phosphorylribose-1-pyrophosphate (PRPP) to anthranilate to yield N-(5'-phosphoribosyl)-anthranilate (PRA). This chain is Anthranilate phosphoribosyltransferase, found in Rhodopseudomonas palustris (strain BisB18).